A 223-amino-acid chain; its full sequence is Small ribosomal subunit protein uS3 (223 aa).

Residues 38–106 form the KH type-2 domain; sequence IREFIAKQLT…RVHINIVEIK (69 aa).

Belongs to the universal ribosomal protein uS3 family. In terms of assembly, part of the 30S ribosomal subunit. Forms a tight complex with proteins S10 and S14.

Its function is as follows. Binds the lower part of the 30S subunit head. Binds mRNA in the 70S ribosome, positioning it for translation. The polypeptide is Small ribosomal subunit protein uS3 (Pediococcus pentosaceus (strain ATCC 25745 / CCUG 21536 / LMG 10740 / 183-1w)).